The sequence spans 371 residues: Histidinol-phosphate aminotransferase (371 aa).

N6-(pyridoxal phosphate)lysine is present on Lys228.

This sequence belongs to the class-II pyridoxal-phosphate-dependent aminotransferase family. Histidinol-phosphate aminotransferase subfamily. It depends on pyridoxal 5'-phosphate as a cofactor.

The enzyme catalyses L-histidinol phosphate + 2-oxoglutarate = 3-(imidazol-4-yl)-2-oxopropyl phosphate + L-glutamate. Its pathway is amino-acid biosynthesis; L-histidine biosynthesis; L-histidine from 5-phospho-alpha-D-ribose 1-diphosphate: step 7/9. The chain is Histidinol-phosphate aminotransferase from Methanococcus maripaludis (strain C7 / ATCC BAA-1331).